We begin with the raw amino-acid sequence, 599 residues long: Aspartate--tRNA ligase (599 aa).

Residue Glu-180 coordinates L-aspartate. Residues Gln-204 to Lys-207 are aspartate. An L-aspartate-binding site is contributed by Arg-226. Residues Arg-226–Glu-228 and Gln-235 contribute to the ATP site. Residue His-454 participates in L-aspartate binding. Residue Glu-488 coordinates ATP. L-aspartate is bound at residue Arg-495. Gly-540–Arg-543 is an ATP binding site.

The protein belongs to the class-II aminoacyl-tRNA synthetase family. Type 1 subfamily. As to quaternary structure, homodimer.

Its subcellular location is the cytoplasm. The catalysed reaction is tRNA(Asp) + L-aspartate + ATP = L-aspartyl-tRNA(Asp) + AMP + diphosphate. In terms of biological role, catalyzes the attachment of L-aspartate to tRNA(Asp) in a two-step reaction: L-aspartate is first activated by ATP to form Asp-AMP and then transferred to the acceptor end of tRNA(Asp). This is Aspartate--tRNA ligase from Clostridium botulinum (strain Eklund 17B / Type B).